Consider the following 266-residue polypeptide: Indole-3-glycerol phosphate synthase (266 aa).

It belongs to the TrpC family.

It carries out the reaction 1-(2-carboxyphenylamino)-1-deoxy-D-ribulose 5-phosphate + H(+) = (1S,2R)-1-C-(indol-3-yl)glycerol 3-phosphate + CO2 + H2O. Its pathway is amino-acid biosynthesis; L-tryptophan biosynthesis; L-tryptophan from chorismate: step 4/5. In Opitutus terrae (strain DSM 11246 / JCM 15787 / PB90-1), this protein is Indole-3-glycerol phosphate synthase.